Here is a 153-residue protein sequence, read N- to C-terminus: Ribosome maturation factor RimP (153 aa).

Belongs to the RimP family.

It is found in the cytoplasm. Required for maturation of 30S ribosomal subunits. The polypeptide is Ribosome maturation factor RimP (Coxiella burnetii (strain CbuG_Q212) (Coxiella burnetii (strain Q212))).